The primary structure comprises 89 residues: Phytosulfokines 1 (89 aa).

Positions 1 to 22 (MVNPGRTARALCLLCLALLLLG) are cleaved as a signal peptide. The propeptide occupies 23-79 (QDTHSRKLLLQEKHSHGVGNGTTTTQEPSRENGGSTGSNNNGQLQFDSAKWEEFHTD). The segment at 33–68 (QEKHSHGVGNGTTTTQEPSRENGGSTGSNNNGQLQF) is disordered. N42 carries an N-linked (GlcNAc...) asparagine glycan. 2 positions are modified to sulfotyrosine: Y80 and Y82. Positions 85–89 (DVKNP) are excised as a propeptide.

It belongs to the phytosulfokine family. Post-translationally, sulfation is important for activity and for the binding to a putative membrane receptor. PSK-alpha is produced by endopeptidase digestion. PSK-beta is produced from PSK-alpha by exopeptidase digestion. In terms of tissue distribution, expressed throughout the seedling. More abundant in fragments containing shoot or root apexes where cells proliferate vigorously.

The protein localises to the secreted. Its function is as follows. Promotes plant cell differentiation, organogenesis and somatic embryogenesis as well as cell proliferation. The protein is Phytosulfokines 1 (PSK1) of Oryza sativa subsp. indica (Rice).